The sequence spans 439 residues: MGNKLHIVSLGCTKNLVDTEVMMGKLQNFELTDNQSDADVIIVNTCGFIDAAKQESINTVLNLHDARKEDSVLVMAGCLSERYKEELAKDMPEVDIFTGVGDYDKIDELLVEKKSRFSEAVYLIDGAERVVTGSTYHAYIKLSEGCNQTCSFCAIPSFKGKLNSRTLDSIAKEVESLVKKGYWDFSFVSQDSSSYLRDKNVKDGLSLLIQRVELIEGVKSARILYLYPSTTSMALLKNIAKSEIFHNYFDMPIQHINDDMLRIMKRGFGKKQTLELLEFMKSLPNSFIRTSFIVGHPGESQEMFDEMCKFASSFGFERINVFAYSDEETTPAHEMSDKIAAKVINKRASILGKIAADVMQASLKKEIGKETLLVIDKESDEHEYLLSARKILWAPDIDGEIYVNDRSGEEELNFGAIYNAEITDMVGNILTATTKNASR.

The MTTase N-terminal domain occupies 3–115 (NKLHIVSLGC…IDELLVEKKS (113 aa)). [4Fe-4S] cluster contacts are provided by Cys12, Cys46, Cys78, Cys146, Cys150, and Cys153. Residues 132-361 (TGSTYHAYIK…GKIAADVMQA (230 aa)) enclose the Radical SAM core domain.

Belongs to the methylthiotransferase family. RimO subfamily. [4Fe-4S] cluster serves as cofactor.

It localises to the cytoplasm. The enzyme catalyses L-aspartate(89)-[ribosomal protein uS12]-hydrogen + (sulfur carrier)-SH + AH2 + 2 S-adenosyl-L-methionine = 3-methylsulfanyl-L-aspartate(89)-[ribosomal protein uS12]-hydrogen + (sulfur carrier)-H + 5'-deoxyadenosine + L-methionine + A + S-adenosyl-L-homocysteine + 2 H(+). Catalyzes the methylthiolation of an aspartic acid residue of ribosomal protein uS12. The protein is Ribosomal protein uS12 methylthiotransferase RimO of Sulfurimonas denitrificans (strain ATCC 33889 / DSM 1251) (Thiomicrospira denitrificans (strain ATCC 33889 / DSM 1251)).